The sequence spans 1062 residues: Carbamoyl phosphate synthase large chain (1062 aa).

The segment at 1-401 is carboxyphosphate synthetic domain; it reads MPKRTDIHKI…AMQKAVQSLE (401 aa). Residues Arg-129, Arg-169, Gly-175, Gly-176, Lys-208, Ile-210, Glu-215, Gly-241, Ile-242, His-243, Gln-284, and Glu-298 each coordinate ATP. One can recognise an ATP-grasp 1 domain in the interval 133-327; sequence KELCQKLGEP…IAKMAAKIAI (195 aa). Mg(2+) is bound by residues Gln-284, Glu-298, and Asn-300. Residues Gln-284, Glu-298, and Asn-300 each coordinate Mn(2+). The tract at residues 402-546 is oligomerization domain; sequence IDEKDLYSAK…YSTYDGENES (145 aa). A carbamoyl phosphate synthetic domain region spans residues 547–929; sequence RKSGKKSVIV…ALYKAFAGAK (383 aa). Residues 671-861 form the ATP-grasp 2 domain; sequence DQIIKSLHLH…MAQVATRVIM (191 aa). The ATP site is built by Arg-707, Asp-746, Leu-748, Glu-752, Gly-777, Val-778, His-779, Ser-780, Gln-820, and Glu-832. Mg(2+) is bound by residues Gln-820, Glu-832, and Asn-834. Gln-820, Glu-832, and Asn-834 together coordinate Mn(2+). Residues 930–1062 enclose the MGS-like domain; that stretch reads MQLPENGNVL…NRSFATDALK (133 aa). Positions 930–1062 are allosteric domain; it reads MQLPENGNVL…NRSFATDALK (133 aa).

The protein belongs to the CarB family. As to quaternary structure, composed of two chains; the small (or glutamine) chain promotes the hydrolysis of glutamine to ammonia, which is used by the large (or ammonia) chain to synthesize carbamoyl phosphate. Tetramer of heterodimers (alpha,beta)4. Mg(2+) is required as a cofactor. The cofactor is Mn(2+).

It carries out the reaction hydrogencarbonate + L-glutamine + 2 ATP + H2O = carbamoyl phosphate + L-glutamate + 2 ADP + phosphate + 2 H(+). The enzyme catalyses hydrogencarbonate + NH4(+) + 2 ATP = carbamoyl phosphate + 2 ADP + phosphate + 2 H(+). It participates in amino-acid biosynthesis; L-arginine biosynthesis; carbamoyl phosphate from bicarbonate: step 1/1. The protein operates within pyrimidine metabolism; UMP biosynthesis via de novo pathway; (S)-dihydroorotate from bicarbonate: step 1/3. Large subunit of the glutamine-dependent carbamoyl phosphate synthetase (CPSase). CPSase catalyzes the formation of carbamoyl phosphate from the ammonia moiety of glutamine, carbonate, and phosphate donated by ATP, constituting the first step of 2 biosynthetic pathways, one leading to arginine and/or urea and the other to pyrimidine nucleotides. The large subunit (synthetase) binds the substrates ammonia (free or transferred from glutamine from the small subunit), hydrogencarbonate and ATP and carries out an ATP-coupled ligase reaction, activating hydrogencarbonate by forming carboxy phosphate which reacts with ammonia to form carbamoyl phosphate. The sequence is that of Carbamoyl phosphate synthase large chain from Lactobacillus helveticus (strain DPC 4571).